Here is a 572-residue protein sequence, read N- to C-terminus: MRTSQYLLSTLKETPADAEVISHQLMLRAGMIRKLASGLYTWLPTGVRVLKKVENIVREEMNNAGAIEVLMPVVQPSELWQESGRWEQYGPELLRIADRGDRPFVLGPTHEEVITDLIRNELSSYKQLPLNFYQIQTKFRDEVRPRFGVMRSREFLMKDAYSFHTSQESLQETYDAMYAAYSKIFSRMGLDFRAVQADTGSIGGSASHEFQVLAQSGEDDVVFSDTSDYAANIELAEAIAPKEPRAAATQEMTLVDTPNAKTIAELVEQFNLPIEKTVKTLLVKAVEGSSFPLVALLVRGDHELNEVKAEKLPQVASPLTFATEEEIRAVVKAGPGSLGPVNMPIPVVIDRTVAAMSDFAAGANIDGKHYFGINWDRDVATPEVADIRNVVAGDPSPDGQGTLLIKRGIEVGHIFQLGTKYSEALKASVQGEDGRNQILTMGCYGIGVTRVVAAAIEQNYDERGIVWPDAIAPFQVAILPMNMHKSFRVQELAEKLYSELRAQGIEVLLDDRKERPGVMFADMELIGIPHTIVLGDRNLDNDDIEYKYRRNGEKQLIKTGDIVDYLVKQIKG.

This sequence belongs to the class-II aminoacyl-tRNA synthetase family. ProS type 1 subfamily. In terms of assembly, homodimer.

Its subcellular location is the cytoplasm. It carries out the reaction tRNA(Pro) + L-proline + ATP = L-prolyl-tRNA(Pro) + AMP + diphosphate. Its function is as follows. Catalyzes the attachment of proline to tRNA(Pro) in a two-step reaction: proline is first activated by ATP to form Pro-AMP and then transferred to the acceptor end of tRNA(Pro). As ProRS can inadvertently accommodate and process non-cognate amino acids such as alanine and cysteine, to avoid such errors it has two additional distinct editing activities against alanine. One activity is designated as 'pretransfer' editing and involves the tRNA(Pro)-independent hydrolysis of activated Ala-AMP. The other activity is designated 'posttransfer' editing and involves deacylation of mischarged Ala-tRNA(Pro). The misacylated Cys-tRNA(Pro) is not edited by ProRS. The chain is Proline--tRNA ligase from Escherichia fergusonii (strain ATCC 35469 / DSM 13698 / CCUG 18766 / IAM 14443 / JCM 21226 / LMG 7866 / NBRC 102419 / NCTC 12128 / CDC 0568-73).